A 363-amino-acid chain; its full sequence is Chorismate synthase (363 aa).

The NADP(+) site is built by Arg48 and Arg54. Residues 125-127 (RSS), 237-238 (NA), Gly277, 292-296 (KPTSS), and Arg318 contribute to the FMN site.

It belongs to the chorismate synthase family. In terms of assembly, homotetramer. Requires FMNH2 as cofactor.

It catalyses the reaction 5-O-(1-carboxyvinyl)-3-phosphoshikimate = chorismate + phosphate. The protein operates within metabolic intermediate biosynthesis; chorismate biosynthesis; chorismate from D-erythrose 4-phosphate and phosphoenolpyruvate: step 7/7. Catalyzes the anti-1,4-elimination of the C-3 phosphate and the C-6 proR hydrogen from 5-enolpyruvylshikimate-3-phosphate (EPSP) to yield chorismate, which is the branch point compound that serves as the starting substrate for the three terminal pathways of aromatic amino acid biosynthesis. This reaction introduces a second double bond into the aromatic ring system. This is Chorismate synthase from Pseudomonas syringae pv. syringae (strain B728a).